We begin with the raw amino-acid sequence, 190 residues long: Xanthine phosphoribosyltransferase (190 aa).

2 residues coordinate xanthine: Leu-20 and Asn-27. Residue 128 to 132 (ANGKA) coordinates 5-phospho-alpha-D-ribose 1-diphosphate. Lys-156 is a xanthine binding site.

This sequence belongs to the purine/pyrimidine phosphoribosyltransferase family. Xpt subfamily. Homodimer.

Its subcellular location is the cytoplasm. The enzyme catalyses XMP + diphosphate = xanthine + 5-phospho-alpha-D-ribose 1-diphosphate. Its pathway is purine metabolism; XMP biosynthesis via salvage pathway; XMP from xanthine: step 1/1. Its function is as follows. Converts the preformed base xanthine, a product of nucleic acid breakdown, to xanthosine 5'-monophosphate (XMP), so it can be reused for RNA or DNA synthesis. In Pseudomonas entomophila (strain L48), this protein is Xanthine phosphoribosyltransferase.